Consider the following 415-residue polypeptide: Gamma-glutamyl phosphate reductase (415 aa).

Belongs to the gamma-glutamyl phosphate reductase family.

The protein resides in the cytoplasm. The catalysed reaction is L-glutamate 5-semialdehyde + phosphate + NADP(+) = L-glutamyl 5-phosphate + NADPH + H(+). Its pathway is amino-acid biosynthesis; L-proline biosynthesis; L-glutamate 5-semialdehyde from L-glutamate: step 2/2. In terms of biological role, catalyzes the NADPH-dependent reduction of L-glutamate 5-phosphate into L-glutamate 5-semialdehyde and phosphate. The product spontaneously undergoes cyclization to form 1-pyrroline-5-carboxylate. The sequence is that of Gamma-glutamyl phosphate reductase from Bacillus thuringiensis subsp. konkukian (strain 97-27).